The following is a 395-amino-acid chain: XK-related protein 8 (395 aa).

Residues 1–12 (MPWSSRGALLRD) lie on the Cytoplasmic side of the membrane. The chain crosses the membrane as a helical span at residues 13–33 (LVLGVLGTAAFLLDLGTDLWA). At 34–47 (AVQYALGGRYLWAA) the chain is on the extracellular side. The chain crosses the membrane as a helical span at residues 48–68 (LVLALLGLASVALQLFSWLWL). Topologically, residues 69–158 (RADPAGLHGS…VLAIMLQSGR (90 aa)) are cytoplasmic. Residues 159 to 179 (AEYYQWVGICTSFLGISWALL) form a helical membrane-spanning segment. Topologically, residues 180 to 200 (DYHRALRTCLPSRPLLGLGSS) are extracellular. A helical membrane pass occupies residues 201–221 (VIYFLWNLLLLWPRVLAVALF). Residues 222 to 223 (SA) are Cytoplasmic-facing. The chain crosses the membrane as a helical span at residues 224-244 (LFPSYVALHFLGLWLVLLLWV). Residues 245 to 258 (WLQGTDFMPDPSSE) are Extracellular-facing. Residues 259–279 (WLYQVTVATILYFSWFNVAEG) form a helical membrane-spanning segment. The Cytoplasmic portion of the chain corresponds to 280-284 (RTRGR). Residues 285-305 (AIIHFAFLLSDSILLVATWVT) form a helical membrane-spanning segment. The Extracellular segment spans residues 306-312 (HSSWLPS). Residues 313–333 (GIPLQLWLPVGCGCFFLGLAL) traverse the membrane as a helical segment. Topologically, residues 334–395 (RLVYYHWLHP…KDEAALPVKG (62 aa)) are cytoplasmic. Ser-362 carries the post-translational modification Phosphoserine. At Thr-375 the chain carries Phosphothreonine.

This sequence belongs to the XK family. Interacts with BSG and NPTN; which act as chaperones to localize XKR8 at the cell membrane. In terms of assembly, homodimer. In terms of processing, undergoes proteolytic processing by caspase-3 (CASP3), leading to its activation. Phosphorylation at Thr-375 activates the phospholipid scramblase activity.

The protein resides in the cell membrane. Its subcellular location is the cytoplasm. It is found in the perinuclear region. The catalysed reaction is a 1,2-diacyl-sn-glycero-3-phospho-L-serine(in) = a 1,2-diacyl-sn-glycero-3-phospho-L-serine(out). Its activity is regulated as follows. Activated upon caspase cleavage to generate the XK-related protein 8, processed form. Does not act prior the onset of apoptosis. Its function is as follows. Phospholipid scramblase that promotes phosphatidylserine exposure on apoptotic cell surface. Phosphatidylserine is a specific marker only present at the surface of apoptotic cells and acts as a specific signal for engulfment. Required for the clearance of apoptotic cells, such as engulfment of apoptotic germ cells by Sertoli cells, clearance of senescent neutrophils or regulation of bipolar cell numbers in the retina. Has no effect on calcium-induced exposure of phosphatidylserine. Promotes myoblast differentiation and survival. This Pan troglodytes (Chimpanzee) protein is XK-related protein 8.